The following is a 123-amino-acid chain: Histone H2B.1/H2B.2 (123 aa).

The segment at 1-30 (MPPKVSGKAAKKAGKAQKNITKGDKKKNRK) is disordered. A glycan (O-linked (GlcNAc) serine) is linked at Ser110. Lys118 is covalently cross-linked (Glycyl lysine isopeptide (Lys-Gly) (interchain with G-Cter in ubiquitin)).

The protein belongs to the histone H2B family. In terms of assembly, the nucleosome is a histone octamer containing two molecules each of H2A, H2B, H3 and H4 assembled in one H3-H4 heterotetramer and two H2A-H2B heterodimers. The octamer wraps approximately 147 bp of DNA. Monoubiquitination of Lys-118 gives a specific tag for epigenetic transcriptional activation and is also prerequisite for histone H3 'Lys-4' and 'Lys-79' methylation. In terms of processing, glcNAcylation at Ser-110 promotes monoubiquitination of Lys-118. It fluctuates in response to extracellular glucose, and associates with transcribed genes.

It is found in the nucleus. The protein localises to the chromosome. Its function is as follows. Core component of nucleosome. Nucleosomes wrap and compact DNA into chromatin, limiting DNA accessibility to the cellular machineries which require DNA as a template. Histones thereby play a central role in transcription regulation, DNA repair, DNA replication and chromosomal stability. DNA accessibility is regulated via a complex set of post-translational modifications of histones, also called histone code, and nucleosome remodeling. This is Histone H2B.1/H2B.2 from Tigriopus californicus (Marine copepod).